We begin with the raw amino-acid sequence, 106 residues long: ATP-dependent Clp protease adapter protein ClpS (106 aa).

The protein belongs to the ClpS family. Binds to the N-terminal domain of the chaperone ClpA.

In terms of biological role, involved in the modulation of the specificity of the ClpAP-mediated ATP-dependent protein degradation. The sequence is that of ATP-dependent Clp protease adapter protein ClpS from Escherichia fergusonii (strain ATCC 35469 / DSM 13698 / CCUG 18766 / IAM 14443 / JCM 21226 / LMG 7866 / NBRC 102419 / NCTC 12128 / CDC 0568-73).